The following is a 309-amino-acid chain: 4-hydroxy-3-methylbut-2-enyl diphosphate reductase (309 aa).

C12 is a binding site for [4Fe-4S] cluster. The (2E)-4-hydroxy-3-methylbut-2-enyl diphosphate site is built by H41 and H74. H41 and H74 together coordinate dimethylallyl diphosphate. Positions 41 and 74 each coordinate isopentenyl diphosphate. C96 provides a ligand contact to [4Fe-4S] cluster. H124 serves as a coordination point for (2E)-4-hydroxy-3-methylbut-2-enyl diphosphate. H124 serves as a coordination point for dimethylallyl diphosphate. Isopentenyl diphosphate is bound at residue H124. E126 (proton donor) is an active-site residue. Position 167 (T167) interacts with (2E)-4-hydroxy-3-methylbut-2-enyl diphosphate. Residue C197 coordinates [4Fe-4S] cluster. 4 residues coordinate (2E)-4-hydroxy-3-methylbut-2-enyl diphosphate: S225, S226, N227, and S269. Dimethylallyl diphosphate contacts are provided by S225, S226, N227, and S269. S225, S226, N227, and S269 together coordinate isopentenyl diphosphate.

Belongs to the IspH family. [4Fe-4S] cluster is required as a cofactor.

The enzyme catalyses isopentenyl diphosphate + 2 oxidized [2Fe-2S]-[ferredoxin] + H2O = (2E)-4-hydroxy-3-methylbut-2-enyl diphosphate + 2 reduced [2Fe-2S]-[ferredoxin] + 2 H(+). It catalyses the reaction dimethylallyl diphosphate + 2 oxidized [2Fe-2S]-[ferredoxin] + H2O = (2E)-4-hydroxy-3-methylbut-2-enyl diphosphate + 2 reduced [2Fe-2S]-[ferredoxin] + 2 H(+). The protein operates within isoprenoid biosynthesis; dimethylallyl diphosphate biosynthesis; dimethylallyl diphosphate from (2E)-4-hydroxy-3-methylbutenyl diphosphate: step 1/1. Its pathway is isoprenoid biosynthesis; isopentenyl diphosphate biosynthesis via DXP pathway; isopentenyl diphosphate from 1-deoxy-D-xylulose 5-phosphate: step 6/6. Its function is as follows. Catalyzes the conversion of 1-hydroxy-2-methyl-2-(E)-butenyl 4-diphosphate (HMBPP) into a mixture of isopentenyl diphosphate (IPP) and dimethylallyl diphosphate (DMAPP). Acts in the terminal step of the DOXP/MEP pathway for isoprenoid precursor biosynthesis. The sequence is that of 4-hydroxy-3-methylbut-2-enyl diphosphate reductase from Shewanella halifaxensis (strain HAW-EB4).